Here is a 602-residue protein sequence, read N- to C-terminus: UvrABC system protein C (602 aa).

The 78-residue stretch at 17–94 (KTSGCYKMYS…IKKYKPTYNI (78 aa)) folds into the GIY-YIG domain. The region spanning 199–234 (SKLLNDIEIKMKEVIMKENFEAAIKLKETKKSLIEI) is the UVR domain.

Belongs to the UvrC family. Interacts with UvrB in an incision complex.

The protein localises to the cytoplasm. Its function is as follows. The UvrABC repair system catalyzes the recognition and processing of DNA lesions. UvrC both incises the 5' and 3' sides of the lesion. The N-terminal half is responsible for the 3' incision and the C-terminal half is responsible for the 5' incision. This is UvrABC system protein C from Borrelia recurrentis (strain A1).